The chain runs to 364 residues: Anhydro-N-acetylmuramic acid kinase (364 aa).

ATP is bound at residue glycine 11–aspartate 18.

Belongs to the anhydro-N-acetylmuramic acid kinase family.

The catalysed reaction is 1,6-anhydro-N-acetyl-beta-muramate + ATP + H2O = N-acetyl-D-muramate 6-phosphate + ADP + H(+). The protein operates within amino-sugar metabolism; 1,6-anhydro-N-acetylmuramate degradation. It participates in cell wall biogenesis; peptidoglycan recycling. Its function is as follows. Catalyzes the specific phosphorylation of 1,6-anhydro-N-acetylmuramic acid (anhMurNAc) with the simultaneous cleavage of the 1,6-anhydro ring, generating MurNAc-6-P. Is required for the utilization of anhMurNAc either imported from the medium or derived from its own cell wall murein, and thus plays a role in cell wall recycling. The sequence is that of Anhydro-N-acetylmuramic acid kinase from Pseudomonas syringae pv. tomato (strain ATCC BAA-871 / DC3000).